Here is a 111-residue protein sequence, read N- to C-terminus: SPbeta prophage-derived uncharacterized protein YolC (111 aa).

A signal peptide spans 1–25 (MKKRLIGFLVLVPALIMSGITLIEA).

The protein is SPbeta prophage-derived uncharacterized protein YolC (yolC) of Bacillus subtilis (strain 168).